Reading from the N-terminus, the 356-residue chain is Molybdenum import ATP-binding protein ModC (356 aa).

The ABC transporter domain maps to 1–232; the sequence is MEDIHARFHI…LDLPIRLGED (232 aa). 33–40 serves as a coordination point for ATP; that stretch reads GHSGSGKT. Residues 291 to 356 enclose the Mop domain; the sequence is ETSVLNLLRG…VQVKSVALME (66 aa).

Belongs to the ABC transporter superfamily. Molybdate importer (TC 3.A.1.8) family. As to quaternary structure, the complex is composed of two ATP-binding proteins (ModC), two transmembrane proteins (ModB) and a solute-binding protein (ModA).

Its subcellular location is the cell inner membrane. The catalysed reaction is molybdate(out) + ATP + H2O = molybdate(in) + ADP + phosphate + H(+). Functionally, part of the ABC transporter complex ModABC involved in molybdenum import. Responsible for energy coupling to the transport system. The sequence is that of Molybdenum import ATP-binding protein ModC from Methylococcus capsulatus (strain ATCC 33009 / NCIMB 11132 / Bath).